A 369-amino-acid polypeptide reads, in one-letter code: Aminomethyltransferase (369 aa).

The protein belongs to the GcvT family. As to quaternary structure, the glycine cleavage system is composed of four proteins: P, T, L and H.

The catalysed reaction is N(6)-[(R)-S(8)-aminomethyldihydrolipoyl]-L-lysyl-[protein] + (6S)-5,6,7,8-tetrahydrofolate = N(6)-[(R)-dihydrolipoyl]-L-lysyl-[protein] + (6R)-5,10-methylene-5,6,7,8-tetrahydrofolate + NH4(+). Its function is as follows. The glycine cleavage system catalyzes the degradation of glycine. The chain is Aminomethyltransferase from Xanthomonas euvesicatoria pv. vesicatoria (strain 85-10) (Xanthomonas campestris pv. vesicatoria).